Here is a 320-residue protein sequence, read N- to C-terminus: Serpentine receptor class delta-40 (320 aa).

The next 7 membrane-spanning stretches (helical) occupy residues 12–32 (IFYPIFFIFSTITQLMLIYLI), 42–62 (MLKVFLLNTSLFQIILVVVSC), 95–115 (YQVLQTSAFMSGMSILITFVF), 133–153 (IILLFHMPIIASMVMEVIMVI), 189–209 (LINFLLISGSVVASPFISFFF), 243–263 (AFLPLIFYVPVFGLYFYCILT), and 273–293 (FMTVVPCLPAFFDPMLTLYFV).

This sequence belongs to the nematode receptor-like protein srd family.

Its subcellular location is the membrane. The polypeptide is Serpentine receptor class delta-40 (srd-40) (Caenorhabditis elegans).